Here is a 270-residue protein sequence, read N- to C-terminus: Tryptophan synthase alpha chain (270 aa).

Active-site proton acceptor residues include Glu49 and Asp60.

This sequence belongs to the TrpA family. In terms of assembly, tetramer of two alpha and two beta chains.

The enzyme catalyses (1S,2R)-1-C-(indol-3-yl)glycerol 3-phosphate + L-serine = D-glyceraldehyde 3-phosphate + L-tryptophan + H2O. It functions in the pathway amino-acid biosynthesis; L-tryptophan biosynthesis; L-tryptophan from chorismate: step 5/5. Functionally, the alpha subunit is responsible for the aldol cleavage of indoleglycerol phosphate to indole and glyceraldehyde 3-phosphate. The protein is Tryptophan synthase alpha chain of Pseudomonas fluorescens (strain ATCC BAA-477 / NRRL B-23932 / Pf-5).